The chain runs to 1323 residues: Sister chromatid cohesion protein PDS5 homolog A-B (1323 aa).

The stretch at 385–421 is one HEAT repeat; that stretch reads FLVNDQLLGFVRERTLDKRWRVRKEAMMGLAQLYKKY. The tract at residues 1138-1323 is disordered; the sequence is PLNATGRRPY…TAQRQIDLHR (186 aa). Residues 1153-1165 are compositionally biased toward low complexity; sequence SEISNNVSINSES. Composition is skewed to polar residues over residues 1166–1176 and 1210–1220; these read DASVANRQSSE and LDQTAPSNTGT. Residues 1235–1246 show a composition bias toward basic and acidic residues; that stretch reads NIRKESEEKKVD.

In terms of assembly, interacts with the cohesin complex. Binds chromatin in a cohesin-dependent manner.

It is found in the nucleus. In terms of biological role, may regulate sister chromatid cohesion during mitosis and couple it to DNA replication. This Xenopus laevis (African clawed frog) protein is Sister chromatid cohesion protein PDS5 homolog A-B (pds5a-b).